The following is a 447-amino-acid chain: CBL-interacting serine/threonine-protein kinase 9 (447 aa).

In terms of domain architecture, Protein kinase spans 19 to 274; that stretch reads YEMGRTLGEG…IAELLEDEWF (256 aa). ATP contacts are provided by residues 25–33 and Lys-48; that span reads LGEGSFAKV. Residue Asp-142 is the Proton acceptor of the active site. Residues 160–189 are activation loop; that stretch reads DFGLSAFSRQVREDGLLHTACGTPNYVAPE. Residue Ser-164 is modified to Phosphoserine. Position 178 is a phosphothreonine (Thr-178). In terms of domain architecture, NAF spans 312 to 336; it reads EKPVSMNAFELISSSSEFSLENLFE. The PPI stretch occupies residues 343-372; that stretch reads KKETRFTSQRSASEIMSKMEETAKPLGFNV.

This sequence belongs to the protein kinase superfamily. CAMK Ser/Thr protein kinase family. SNF1 subfamily. In terms of assembly, interacts with CBL2 and CBL3. It depends on Mn(2+) as a cofactor. Expressed at low levels in roots and shoots. Detected in root vascular bundles and in the leaf vascular tissue and hydathode, but not in root tips.

Its subcellular location is the cytoplasm. It localises to the nucleus. The enzyme catalyses L-seryl-[protein] + ATP = O-phospho-L-seryl-[protein] + ADP + H(+). It catalyses the reaction L-threonyl-[protein] + ATP = O-phospho-L-threonyl-[protein] + ADP + H(+). Functionally, CIPK serine-threonine protein kinases interact with CBL proteins. Binding of a CBL protein to the regulatory NAF domain of CIPK protein lead to the activation of the kinase in a calcium-dependent manner. Involved in K(+) homeostasis under low-K(+) stress. The chain is CBL-interacting serine/threonine-protein kinase 9 (CIPK9) from Arabidopsis thaliana (Mouse-ear cress).